A 513-amino-acid chain; its full sequence is tRNA A64-2'-O-ribosylphosphate transferase (513 aa).

Functionally, tRNA backbone modifying enzyme that mediates initiator/ elongator tRNA discrimination. This enzyme modifies exclusively the initiator tRNA in position 64 using 5'-phosphoribosyl-1'-pyrophosphate as the modification donor. Recognize the stem-loop IV region that is unique in eukaryotic cytoplasmic initiator tRNAs. In Saccharomyces cerevisiae (strain ATCC 204508 / S288c) (Baker's yeast), this protein is tRNA A64-2'-O-ribosylphosphate transferase (RIT1).